We begin with the raw amino-acid sequence, 97 residues long: Stefin-1 (97 aa).

Positions glutamine 46–glycine 50 match the Secondary area of contact motif.

Belongs to the cystatin family.

Its subcellular location is the cytoplasm. In terms of biological role, this is an intracellular thiol proteinase inhibitor. The chain is Stefin-1 (Stfa1) from Mus musculus (Mouse).